A 287-amino-acid chain; its full sequence is Large ribosomal subunit protein uL5m (287 aa).

Residues 1–18 constitute a mitochondrion transit peptide; that stretch reads MLGIRKNIRISVNFLQRR. Basic and acidic residues predominate over residues 80 to 89; sequence DEHTQKDRLP. The disordered stretch occupies residues 80–109; it reads DEHTQKDRLPRWIGDNPYYKNRPPQKMRGN.

The protein belongs to the universal ribosomal protein uL5 family. In terms of assembly, component of the mitochondrial large ribosomal subunit (mt-LSU). Mature yeast 74S mitochondrial ribosomes consist of a small (37S) and a large (54S) subunit. The 37S small subunit contains a 15S ribosomal RNA (15S mt-rRNA) and at least 32 different proteins. The 54S large subunit contains a 21S rRNA (21S mt-rRNA) and at least 45 different proteins. Unlike bacterial L5, uL5m does not bind zinc.

Its subcellular location is the mitochondrion. Component of the mitochondrial ribosome (mitoribosome), a dedicated translation machinery responsible for the synthesis of mitochondrial genome-encoded proteins, including at least some of the essential transmembrane subunits of the mitochondrial respiratory chain. The mitoribosomes are attached to the mitochondrial inner membrane and translation products are cotranslationally integrated into the membrane. The sequence is that of Large ribosomal subunit protein uL5m (mrpl7) from Schizosaccharomyces pombe (strain 972 / ATCC 24843) (Fission yeast).